Here is a 436-residue protein sequence, read N- to C-terminus: Cysteine--tRNA ligase (436 aa).

Zn(2+) is bound at residue Cys-24. The 'HIGH' region signature appears at Pro-26–Asn-36. Cys-202, His-227, and Glu-231 together coordinate Zn(2+). The 'KMSKS' region motif lies at Lys-259–Ser-263. Lys-262 is an ATP binding site.

The protein belongs to the class-I aminoacyl-tRNA synthetase family. As to quaternary structure, monomer. The cofactor is Zn(2+).

The protein resides in the cytoplasm. It carries out the reaction tRNA(Cys) + L-cysteine + ATP = L-cysteinyl-tRNA(Cys) + AMP + diphosphate. The protein is Cysteine--tRNA ligase of Ureaplasma parvum serovar 3 (strain ATCC 700970).